The following is a 297-amino-acid chain: MALNRIVLFYGFTPIPDPDAVRLWQRALCEKLGLTGRIIISKDGINATVGGEIGAVKQYVKTTREYKGFHGIDVKWSDGGAEDFPRLSVKVRDEIVSFGAPGELTVDAGGVVGGGTHLKPEELHELVEARKQSGDEVVFFDGRNAFEAQIGRFKDAVVPDVATTHDFIKELDSGKYDALKDKPVATYCTGGIRCEVLSSLMVNRGFKEVYQLDGGIVRYGETFKDQGLWEGSLYVFDKRMHLEFSDEAKTIGECVRCKAPTSKFENCSNPSCRTLTLYCADCAASPETLRCPGGCAA.

In terms of domain architecture, Rhodanese spans 133–228 (SGDEVVFFDG…YGETFKDQGL (96 aa)). Cys188 (cysteine persulfide intermediate) is an active-site residue.

This sequence belongs to the TrhO family.

The enzyme catalyses uridine(34) in tRNA + AH2 + O2 = 5-hydroxyuridine(34) in tRNA + A + H2O. Its function is as follows. Catalyzes oxygen-dependent 5-hydroxyuridine (ho5U) modification at position 34 in tRNAs. In Pseudarthrobacter chlorophenolicus (strain ATCC 700700 / DSM 12829 / CIP 107037 / JCM 12360 / KCTC 9906 / NCIMB 13794 / A6) (Arthrobacter chlorophenolicus), this protein is tRNA uridine(34) hydroxylase.